A 181-amino-acid chain; its full sequence is Ribosome-recycling factor (181 aa).

Residues 135 to 160 (MDDIKKDKDMPEDDARKAEDQTQKLT) form a disordered region.

This sequence belongs to the RRF family.

The protein resides in the cytoplasm. Responsible for the release of ribosomes from messenger RNA at the termination of protein biosynthesis. May increase the efficiency of translation by recycling ribosomes from one round of translation to another. This chain is Ribosome-recycling factor, found in Leuconostoc mesenteroides subsp. mesenteroides (strain ATCC 8293 / DSM 20343 / BCRC 11652 / CCM 1803 / JCM 6124 / NCDO 523 / NBRC 100496 / NCIMB 8023 / NCTC 12954 / NRRL B-1118 / 37Y).